Here is a 1492-residue protein sequence, read N- to C-terminus: Putative leucine-rich repeat-containing protein DDB_G0290503 (1492 aa).

Residues 2–111 enclose the PH domain; the sequence is SILLEGYLEK…WIEGIKDAIK (110 aa). LRR repeat units follow at residues 123 to 144, 180 to 204, 258 to 284, 329 to 351, 352 to 375, 389 to 413, 439 to 462, 519 to 543, 551 to 575, 579 to 603, 632 to 656, 728 to 752, 806 to 830, 831 to 855, 895 to 919, 927 to 951, 955 to 979, 1013 to 1036, 1044 to 1068, 1138 to 1164, and 1210 to 1232; these read LDGL…IKHL, IKSL…VEKL, QESL…QFEK, KNQF…SIVD, DKLK…EIDN, ISKI…SIDK, LEKL…ILEI, INEL…NQSS, LNQL…IIER, IDQL…NESS, LDEL…NQSS, LKSL…NQDS, INEL…NESS, LIQL…IIER, LNQL…NQSS, NEKL…NESL, FENL…IIDV, LQDL…ELKE, and NAHL…GFNE. The interval 1272-1292 is disordered; it reads RSSSSSLHQQQQMISPDLSNS. Low complexity predominate over residues 1274–1286; it reads SSSSLHQQQQMIS. LRR repeat units lie at residues 1424 to 1444 and 1445 to 1468; these read SSEK…KYFF and AIAR…IFDM.

The protein is Putative leucine-rich repeat-containing protein DDB_G0290503 of Dictyostelium discoideum (Social amoeba).